A 353-amino-acid polypeptide reads, in one-letter code: Holliday junction branch migration complex subunit RuvB (353 aa).

The interval 4 to 185 (ADRLITATGG…FGIVQRLEFY (182 aa)) is large ATPase domain (RuvB-L). ATP-binding positions include Ile24, Arg25, Gly66, Lys69, Thr70, Thr71, 132–134 (EDF), Arg175, Tyr185, and Arg222. Thr70 is a Mg(2+) binding site. Positions 186-256 (NIADLSTIVS…TADKALNLLD (71 aa)) are small ATPAse domain (RuvB-S). Positions 259–353 (EHGFDHQDRR…DDFGDEPVDL (95 aa)) are head domain (RuvB-H). 3 residues coordinate DNA: Arg295, Arg314, and Arg319.

The protein belongs to the RuvB family. As to quaternary structure, homohexamer. Forms an RuvA(8)-RuvB(12)-Holliday junction (HJ) complex. HJ DNA is sandwiched between 2 RuvA tetramers; dsDNA enters through RuvA and exits via RuvB. An RuvB hexamer assembles on each DNA strand where it exits the tetramer. Each RuvB hexamer is contacted by two RuvA subunits (via domain III) on 2 adjacent RuvB subunits; this complex drives branch migration. In the full resolvosome a probable DNA-RuvA(4)-RuvB(12)-RuvC(2) complex forms which resolves the HJ.

It is found in the cytoplasm. The enzyme catalyses ATP + H2O = ADP + phosphate + H(+). Its function is as follows. The RuvA-RuvB-RuvC complex processes Holliday junction (HJ) DNA during genetic recombination and DNA repair, while the RuvA-RuvB complex plays an important role in the rescue of blocked DNA replication forks via replication fork reversal (RFR). RuvA specifically binds to HJ cruciform DNA, conferring on it an open structure. The RuvB hexamer acts as an ATP-dependent pump, pulling dsDNA into and through the RuvAB complex. RuvB forms 2 homohexamers on either side of HJ DNA bound by 1 or 2 RuvA tetramers; 4 subunits per hexamer contact DNA at a time. Coordinated motions by a converter formed by DNA-disengaged RuvB subunits stimulates ATP hydrolysis and nucleotide exchange. Immobilization of the converter enables RuvB to convert the ATP-contained energy into a lever motion, pulling 2 nucleotides of DNA out of the RuvA tetramer per ATP hydrolyzed, thus driving DNA branch migration. The RuvB motors rotate together with the DNA substrate, which together with the progressing nucleotide cycle form the mechanistic basis for DNA recombination by continuous HJ branch migration. Branch migration allows RuvC to scan DNA until it finds its consensus sequence, where it cleaves and resolves cruciform DNA. The protein is Holliday junction branch migration complex subunit RuvB of Pseudomonas syringae pv. syringae (strain B728a).